Consider the following 365-residue polypeptide: WAT1-related protein At4g01430 (365 aa).

10 helical membrane passes run 7–27 (WAPV…NALV), 39–59 (IFGA…SYIW), 76–96 (FISG…GLSY), 100–120 (TVSM…ALIF), 132–152 (AGVL…LLTF), 183–203 (WLLG…WMLF), 216–236 (YSST…LSLY), 250–270 (FVIL…TVVT), 280–300 (VFVS…DFLI), and 305–325 (LYLG…VFLW). An EamA 1 domain is found at 20–151 (MGSVNALVKK…ICIMGAMLLT (132 aa)). Residues 216–324 (YSSTCLMSVF…VTITGLYVFL (109 aa)) form the EamA 2 domain. Positions 339 to 365 (LNSSQFSQNKDNEDHTIANHKDTNLPV) are disordered. Basic and acidic residues predominate over residues 348–365 (KDNEDHTIANHKDTNLPV).

The protein belongs to the drug/metabolite transporter (DMT) superfamily. Plant drug/metabolite exporter (P-DME) (TC 2.A.7.4) family.

It localises to the membrane. In Arabidopsis thaliana (Mouse-ear cress), this protein is WAT1-related protein At4g01430.